A 211-amino-acid polypeptide reads, in one-letter code: Type II secretion system protein J (211 aa).

The propeptide at M1–G7 is leader sequence. F8 carries the post-translational modification N-methylphenylalanine. Residues F8 to F28 form a helical membrane-spanning segment.

Belongs to the GSP J family.

It is found in the membrane. Functionally, involved in a type II secretion system (T2SS, formerly general secretion pathway, GSP) for the export of proteins. This Xanthomonas campestris pv. campestris (strain ATCC 33913 / DSM 3586 / NCPPB 528 / LMG 568 / P 25) protein is Type II secretion system protein J (xpsJ).